The primary structure comprises 423 residues: UDP-N-acetylglucosamine 1-carboxyvinyltransferase (423 aa).

22-23 provides a ligand contact to phosphoenolpyruvate; that stretch reads KN. Arginine 93 is a UDP-N-acetyl-alpha-D-glucosamine binding site. Cysteine 117 serves as the catalytic Proton donor. 2-(S-cysteinyl)pyruvic acid O-phosphothioketal is present on cysteine 117. Positions 305 and 327 each coordinate UDP-N-acetyl-alpha-D-glucosamine.

It belongs to the EPSP synthase family. MurA subfamily.

It localises to the cytoplasm. It carries out the reaction phosphoenolpyruvate + UDP-N-acetyl-alpha-D-glucosamine = UDP-N-acetyl-3-O-(1-carboxyvinyl)-alpha-D-glucosamine + phosphate. It functions in the pathway cell wall biogenesis; peptidoglycan biosynthesis. Cell wall formation. Adds enolpyruvyl to UDP-N-acetylglucosamine. The sequence is that of UDP-N-acetylglucosamine 1-carboxyvinyltransferase from Acidithiobacillus ferrooxidans (strain ATCC 23270 / DSM 14882 / CIP 104768 / NCIMB 8455) (Ferrobacillus ferrooxidans (strain ATCC 23270)).